We begin with the raw amino-acid sequence, 331 residues long: DNA fragmentation factor subunit alpha (331 aa).

Met1 is modified (N-acetylmethionine). Positions 17 to 96 constitute a CIDE-N domain; it reads PLKPCLLRRN…ALACNEKWIY (80 aa). Residue Thr243 is modified to Phosphothreonine. A disordered region spans residues 306-331; it reads LRNLSARRSPLPGEPQRPKRAKRDSS.

As to quaternary structure, heterodimer of DFFA and DFFB. Post-translationally, caspase-3 cleaves DFF45 at 2 sites to generate an active factor.

The protein localises to the cytoplasm. Inhibitor of the caspase-activated DNase (DFF40). The sequence is that of DNA fragmentation factor subunit alpha (Dffa) from Mus musculus (Mouse).